A 419-amino-acid chain; its full sequence is Acetylornithine aminotransferase (419 aa).

Pyridoxal 5'-phosphate-binding positions include Gly-116–Ala-117 and Phe-149. Residue Arg-152 participates in N(2)-acetyl-L-ornithine binding. Asp-240 to Gln-243 contributes to the pyridoxal 5'-phosphate binding site. Residue Lys-269 is modified to N6-(pyridoxal phosphate)lysine. Ser-296 contacts N(2)-acetyl-L-ornithine. Thr-297 provides a ligand contact to pyridoxal 5'-phosphate.

The protein belongs to the class-III pyridoxal-phosphate-dependent aminotransferase family. ArgD subfamily. In terms of assembly, homodimer. Pyridoxal 5'-phosphate serves as cofactor.

Its subcellular location is the cytoplasm. It carries out the reaction N(2)-acetyl-L-ornithine + 2-oxoglutarate = N-acetyl-L-glutamate 5-semialdehyde + L-glutamate. Its pathway is amino-acid biosynthesis; L-arginine biosynthesis; N(2)-acetyl-L-ornithine from L-glutamate: step 4/4. This chain is Acetylornithine aminotransferase, found in Prochlorococcus marinus (strain SARG / CCMP1375 / SS120).